An 88-amino-acid polypeptide reads, in one-letter code: Small ribosomal subunit protein bS20 (88 aa).

The tract at residues 69 to 88 is disordered; the sequence is KNTASRKKSRLTKRFNKLTG. The span at 71 to 88 shows a compositional bias: basic residues; sequence TASRKKSRLTKRFNKLTG.

This sequence belongs to the bacterial ribosomal protein bS20 family.

Functionally, binds directly to 16S ribosomal RNA. The protein is Small ribosomal subunit protein bS20 of Pelotomaculum thermopropionicum (strain DSM 13744 / JCM 10971 / SI).